Here is a 271-residue protein sequence, read N- to C-terminus: 4-hydroxy-tetrahydrodipicolinate reductase (271 aa).

NAD(+) contacts are provided by residues 12-17 (GGSGRM) and E38. R39 provides a ligand contact to NADP(+). Residues 102–104 (GTT) and 126–129 (APNM) each bind NAD(+). Catalysis depends on H159, which acts as the Proton donor/acceptor. Position 160 (H160) interacts with (S)-2,3,4,5-tetrahydrodipicolinate. K163 acts as the Proton donor in catalysis. 169-170 (GT) contributes to the (S)-2,3,4,5-tetrahydrodipicolinate binding site.

It belongs to the DapB family.

It localises to the cytoplasm. The enzyme catalyses (S)-2,3,4,5-tetrahydrodipicolinate + NAD(+) + H2O = (2S,4S)-4-hydroxy-2,3,4,5-tetrahydrodipicolinate + NADH + H(+). The catalysed reaction is (S)-2,3,4,5-tetrahydrodipicolinate + NADP(+) + H2O = (2S,4S)-4-hydroxy-2,3,4,5-tetrahydrodipicolinate + NADPH + H(+). The protein operates within amino-acid biosynthesis; L-lysine biosynthesis via DAP pathway; (S)-tetrahydrodipicolinate from L-aspartate: step 4/4. Catalyzes the conversion of 4-hydroxy-tetrahydrodipicolinate (HTPA) to tetrahydrodipicolinate. This Shewanella sediminis (strain HAW-EB3) protein is 4-hydroxy-tetrahydrodipicolinate reductase.